The primary structure comprises 197 residues: Histocompatibility antigen 60c (197 aa).

The first 17 residues, 1-17 (MALLLLILESCSAGTYA), serve as a signal peptide directing secretion. 3 N-linked (GlcNAc...) asparagine glycosylation sites follow: Asn51, Asn81, and Asn114. Ser177 carries GPI-anchor amidated serine lipidation. The propeptide at 178 to 197 (MACKSSPFDGLIMILLIYIL) is removed in mature form.

The protein belongs to the NKG2D ligand family. As to expression, expressed in skin, and weakly in large intestine.

The protein localises to the cell membrane. In terms of biological role, ligand for the KLRK1 immunosurveillance receptor. Binding to KLRK1 stimulates cell lysis in vitro. The sequence is that of Histocompatibility antigen 60c from Mus musculus (Mouse).